The following is a 171-amino-acid chain: Transcriptional repressor NrdR (171 aa).

Residues 3–34 (CPFCGDPNTQVADTRENEGGEVVRRRRRCPKC) fold into a zinc finger. One can recognise an ATP-cone domain in the interval 49–139 (PHIVKRNGNR…VYRNFADVDE (91 aa)). The tract at residues 148–171 (KARPKRNRPAEPPEPTSENDLFRS) is disordered.

It belongs to the NrdR family. Requires Zn(2+) as cofactor.

Functionally, negatively regulates transcription of bacterial ribonucleotide reductase nrd genes and operons by binding to NrdR-boxes. This is Transcriptional repressor NrdR from Aromatoleum aromaticum (strain DSM 19018 / LMG 30748 / EbN1) (Azoarcus sp. (strain EbN1)).